The primary structure comprises 782 residues: DNA repair and recombination protein RAD54-like (782 aa).

Residues 1-20 (MRRSLAPSQRGGQRLSSRND) are compositionally biased toward polar residues. Residues 1–28 (MRRSLAPSQRGGQRLSSRNDFTPPLLKK) form a disordered region. The segment at 2–9 (RRSLAPSQ) is required for chromatin remodeling, strand pairing activities and coupling of ATPase activity. The residue at position 22 (Thr22) is a Phosphothreonine. The region spanning 168–343 (EGKRGNFNGC…FSLVNFVNPE (176 aa)) is the Helicase ATP-binding domain. ATP is bound at residue 181–188 (DEMGLGKT). Residues 294–297 (DEGH) carry the DEGH box motif. Residues 501–658 (LLDFMLAAIR…NNESAEKHFT (158 aa)) enclose the Helicase C-terminal domain. Residues 741–753 (SQKIEATPATETS) show a composition bias toward polar residues. A disordered region spans residues 741 to 782 (SQKIEATPATETSVEAKLEPERRKRPAMPLSDDSADEDFQGF). The span at 773 to 782 (DSADEDFQGF) shows a compositional bias: acidic residues.

Belongs to the SNF2/RAD54 helicase family. Interacts (via N-terminus) with spn-A/Rad51.

The protein localises to the nucleus. Its function is as follows. Involved in mitotic DNA repair and meiotic recombination. Functions in the recombinational DNA repair pathway. Essential for interhomolog gene conversion (GC), but may have a less important role in intersister GC than spn-A/Rad51. In the presence of DNA, spn-A/Rad51 enhances the ATPase activity of okr/Rad54. This Drosophila persimilis (Fruit fly) protein is DNA repair and recombination protein RAD54-like.